The primary structure comprises 325 residues: Sel1-repeat-containing protein YbeQ (325 aa).

Sel1-like repeat units follow at residues 26–61, 63–97, 103–130, 132–167, 168–203, 205–239, 242–275, and 280–305; these read EAQY…EQGH, EAQY…LQGH, ALGW…AESG, SYAQ…LQGH, SDAQ…QQGN, HAQF…AQGS, AYVN…ECND, and YNLA…LYRK.

It to E.coli YbeT.

The chain is Sel1-repeat-containing protein YbeQ (ybeQ) from Escherichia coli (strain K12).